The following is a 93-amino-acid chain: uncharacterized protein (93 aa).

The tract at residues 73–93 is disordered; sequence KWTVSGPVKQDTGKTDPAEKN. Residues 83-93 are compositionally biased toward basic and acidic residues; it reads DTGKTDPAEKN.

This is an uncharacterized protein from Rhodobacter capsulatus (Rhodopseudomonas capsulata).